The sequence spans 162 residues: Xylulose kinase (162 aa).

Residues 16-39 (GGHSATPRPATGPAGPAAHSGRHQ) are disordered. Positions 20–33 (ATPRPATGPAGPAA) are enriched in low complexity.

The protein belongs to the FGGY kinase family.

It catalyses the reaction D-xylulose + ATP = D-xylulose 5-phosphate + ADP + H(+). In terms of biological role, catalyzes the phosphorylation of D-xylulose to D-xylulose 5-phosphate. The protein is Xylulose kinase of Actinoplanes sp. (strain ATCC 31351 / 3876) (Ampullariella sp.).